The following is a 72-amino-acid chain: UPF0352 protein Shal_2512 (72 aa).

This sequence belongs to the UPF0352 family.

This Shewanella halifaxensis (strain HAW-EB4) protein is UPF0352 protein Shal_2512.